The primary structure comprises 186 residues: Acireductone dioxygenase (186 aa).

Positions 103, 105, 109, and 147 each coordinate Fe(2+). Positions 103, 105, 109, and 147 each coordinate Ni(2+).

Belongs to the acireductone dioxygenase (ARD) family. Monomer. Fe(2+) serves as cofactor. The cofactor is Ni(2+).

The enzyme catalyses 1,2-dihydroxy-5-(methylsulfanyl)pent-1-en-3-one + O2 = 3-(methylsulfanyl)propanoate + CO + formate + 2 H(+). It carries out the reaction 1,2-dihydroxy-5-(methylsulfanyl)pent-1-en-3-one + O2 = 4-methylsulfanyl-2-oxobutanoate + formate + 2 H(+). The protein operates within amino-acid biosynthesis; L-methionine biosynthesis via salvage pathway; L-methionine from S-methyl-5-thio-alpha-D-ribose 1-phosphate: step 5/6. Functionally, catalyzes 2 different reactions between oxygen and the acireductone 1,2-dihydroxy-3-keto-5-methylthiopentene (DHK-MTPene) depending upon the metal bound in the active site. Fe-containing acireductone dioxygenase (Fe-ARD) produces formate and 2-keto-4-methylthiobutyrate (KMTB), the alpha-ketoacid precursor of methionine in the methionine recycle pathway. Ni-containing acireductone dioxygenase (Ni-ARD) produces methylthiopropionate, carbon monoxide and formate, and does not lie on the methionine recycle pathway. This Parasynechococcus marenigrum (strain WH8102) protein is Acireductone dioxygenase.